The sequence spans 316 residues: Ribosomal RNA small subunit methyltransferase H (316 aa).

S-adenosyl-L-methionine is bound by residues 35 to 37, Asp55, Phe84, Asp105, and Gln112; that span reads SGH.

It belongs to the methyltransferase superfamily. RsmH family.

Its subcellular location is the cytoplasm. It carries out the reaction cytidine(1402) in 16S rRNA + S-adenosyl-L-methionine = N(4)-methylcytidine(1402) in 16S rRNA + S-adenosyl-L-homocysteine + H(+). Functionally, specifically methylates the N4 position of cytidine in position 1402 (C1402) of 16S rRNA. This Streptococcus equi subsp. zooepidemicus (strain H70) protein is Ribosomal RNA small subunit methyltransferase H.